We begin with the raw amino-acid sequence, 317 residues long: Malate dehydrogenase (317 aa).

Residues 13–18 (GAGNIG) and D38 contribute to the NAD(+) site. Positions 87 and 93 each coordinate substrate. NAD(+) is bound by residues N100 and 123 to 125 (VTN). N125 and R156 together coordinate substrate. The active-site Proton acceptor is H180.

Belongs to the LDH/MDH superfamily. MDH type 3 family.

The catalysed reaction is (S)-malate + NAD(+) = oxaloacetate + NADH + H(+). Catalyzes the reversible oxidation of malate to oxaloacetate. This Anaplasma marginale (strain St. Maries) protein is Malate dehydrogenase.